Here is a 257-residue protein sequence, read N- to C-terminus: Taurine import ATP-binding protein TauB (257 aa).

One can recognise an ABC transporter domain in the interval 6-233 (LDKISIHYDG…RYAAGEPIRA (228 aa)). Residue 38 to 45 (GRSGCGKT) participates in ATP binding.

The protein belongs to the ABC transporter superfamily. Taurine importer (TC 3.A.1.17.1) family. In terms of assembly, the complex is composed of two ATP-binding proteins (TauB), two transmembrane proteins (TauC) and a solute-binding protein (TauA).

The protein resides in the cell inner membrane. It carries out the reaction taurine(out) + ATP + H2O = taurine(in) + ADP + phosphate + H(+). Part of the ABC transporter complex TauABC involved in taurine import. Responsible for energy coupling to the transport system. In Mesorhizobium japonicum (strain LMG 29417 / CECT 9101 / MAFF 303099) (Mesorhizobium loti (strain MAFF 303099)), this protein is Taurine import ATP-binding protein TauB.